Reading from the N-terminus, the 444-residue chain is Acyl-CoA 6-desaturase (444 aa).

Topologically, residues 1 to 130 (MGGGGQQTDR…EAEGCFKTQP (130 aa)) are cytoplasmic. In terms of domain architecture, Cytochrome b5 heme-binding spans 18 to 95 (FSSYTWEEVQ…LKPLLIGELE (78 aa)). The chain crosses the membrane as a helical span at residues 131 to 151 (LFFALHLGHILLLEAIAFMMV). At 152-157 (WYFGTG) the chain is on the lumenal side. The chain crosses the membrane as a helical span at residues 158–178 (WINTLIVAVILATAQSQAGWL). Over 179-264 (QHDFGHLSVF…KHLPYNHQHK (86 aa)) the chain is Cytoplasmic. The Histidine box-1 signature appears at 180-184 (HDFGH). Positions 217–221 (HFQHH) match the Histidine box-2 motif. The chain crosses the membrane as a helical span at residues 265 to 285 (YFFFIGPPLLIPVYFQFQIFH). The Lumenal segment spans residues 286–305 (NMISHGMWVDLLWCISYYVR). Residues 306–326 (YFLCYTQFYGVFWAIILFNFV) form a helical membrane-spanning segment. The Cytoplasmic portion of the chain corresponds to 327 to 444 (RFMESHWFVW…ELWLDAYLNK (118 aa)). The short motif at 382–386 (QIEHH) is the Histidine box-3 element.

Belongs to the fatty acid desaturase type 1 family.

The protein resides in the endoplasmic reticulum membrane. The catalysed reaction is (9Z,12Z)-octadecadienoyl-CoA + 2 Fe(II)-[cytochrome b5] + O2 + 2 H(+) = (6Z,9Z,12Z)-octadecatrienoyl-CoA + 2 Fe(III)-[cytochrome b5] + 2 H2O. It catalyses the reaction (9Z,12Z,15Z)-octadecatrienoyl-CoA + 2 Fe(II)-[cytochrome b5] + O2 + 2 H(+) = (6Z,9Z,12Z,15Z)-octadecatetraenoyl-CoA + 2 Fe(III)-[cytochrome b5] + 2 H2O. The enzyme catalyses (8Z,11Z,14Z,17Z)-eicosatetraenoyl-CoA + 2 Fe(II)-[cytochrome b5] + O2 + 2 H(+) = (5Z,8Z,11Z,14Z,17Z)-eicosapentaenoyl-CoA + 2 Fe(III)-[cytochrome b5] + 2 H2O. It carries out the reaction (8Z,11Z,14Z)-eicosatrienoyl-CoA + 2 Fe(II)-[cytochrome b5] + O2 + 2 H(+) = (5Z,8Z,11Z,14Z)-eicosatetraenoyl-CoA + 2 Fe(III)-[cytochrome b5] + 2 H2O. The protein operates within lipid metabolism; polyunsaturated fatty acid biosynthesis. Fatty acid desaturase with bifunctional delta-5 and delta-6 activities. Component of a lipid metabolic pathway that catalyzes the biosynthesis of polyunsaturated fatty acids (PUFA) with preference toward n-3 substrates and Delta-6 function. The protein is Acyl-CoA 6-desaturase (fads2) of Danio rerio (Zebrafish).